Consider the following 474-residue polypeptide: Bifunctional protein HldE (474 aa).

The ribokinase stretch occupies residues methionine 1–threonine 318. Asparagine 195–glutamate 198 lines the ATP pocket. Aspartate 264 is an active-site residue. The segment at methionine 344–glutamine 474 is cytidylyltransferase.

It in the N-terminal section; belongs to the carbohydrate kinase PfkB family. The protein in the C-terminal section; belongs to the cytidylyltransferase family. Homodimer.

The enzyme catalyses D-glycero-beta-D-manno-heptose 7-phosphate + ATP = D-glycero-beta-D-manno-heptose 1,7-bisphosphate + ADP + H(+). The catalysed reaction is D-glycero-beta-D-manno-heptose 1-phosphate + ATP + H(+) = ADP-D-glycero-beta-D-manno-heptose + diphosphate. It functions in the pathway nucleotide-sugar biosynthesis; ADP-L-glycero-beta-D-manno-heptose biosynthesis; ADP-L-glycero-beta-D-manno-heptose from D-glycero-beta-D-manno-heptose 7-phosphate: step 1/4. The protein operates within nucleotide-sugar biosynthesis; ADP-L-glycero-beta-D-manno-heptose biosynthesis; ADP-L-glycero-beta-D-manno-heptose from D-glycero-beta-D-manno-heptose 7-phosphate: step 3/4. It participates in bacterial outer membrane biogenesis; LPS core biosynthesis. Catalyzes the phosphorylation of D-glycero-D-manno-heptose 7-phosphate at the C-1 position to selectively form D-glycero-beta-D-manno-heptose-1,7-bisphosphate. Its function is as follows. Catalyzes the ADP transfer from ATP to D-glycero-beta-D-manno-heptose 1-phosphate, yielding ADP-D-glycero-beta-D-manno-heptose. The polypeptide is Bifunctional protein HldE (Photorhabdus laumondii subsp. laumondii (strain DSM 15139 / CIP 105565 / TT01) (Photorhabdus luminescens subsp. laumondii)).